Reading from the N-terminus, the 1205-residue chain is A disintegrin and metalloproteinase with thrombospondin motifs 3 (1205 aa).

The first 20 residues, 1–20 (MVLLSLWLIAAALVEVRTSA), serve as a signal peptide directing secretion. Positions 21–249 (DGQAGNEEMV…QLNETMRRRR (229 aa)) are excised as a propeptide. Asn83, Asn119, Asn242, and Asn345 each carry an N-linked (GlcNAc...) asparagine glycan. The 205-residue stretch at 256 to 460 (YNIEVLLGVD…HSYDCLLDDP (205 aa)) folds into the Peptidase M12B domain. Disulfide bonds link Cys333–Cys382, Cys376–Cys455, and Cys415–Cys441. His398 serves as a coordination point for Zn(2+). Residue Glu399 is part of the active site. Zn(2+) is bound by residues His402 and His408. The region spanning 470 to 550 (ELPGINYSMD…MWKNANQQKQ (81 aa)) is the Disintegrin domain. A glycan (N-linked (GlcNAc...) asparagine) is linked at Asn475. Cystine bridges form between Cys482–Cys507, Cys493–Cys516, Cys502–Cys535, Cys529–Cys540, Cys563–Cys600, Cys567–Cys605, and Cys578–Cys590. The TSP type-1 1 domain occupies 551–606 (DGNWGSWTKFGSCSRTCGTGVRFRTRQCNNPMPINGGQDCPGVNFEYQLCNTEECQ). A spacer region spans residues 713 to 844 (RTVKGTFTRT…NSNNVIQEEL (132 aa)). Residue Asn814 is glycosylated (N-linked (GlcNAc...) asparagine). TSP type-1 domains lie at 845–905 (DTFE…QECT), 906–965 (HPLW…NRVP), and 966–1014 (CPAQ…QLPP). The N-linked (GlcNAc...) asparagine glycan is linked to Asn942. 3 disulfide bridges follow: Cys978/Cys1010, Cys982/Cys1015, and Cys993/Cys999. Residues 1015-1054 (CNDEPCLGDKSIFCQMEVLARYCSIPGYNKLCCESCSKRS) enclose the PLAC domain. The tract at residues 1174–1205 (DSIGASSQARTSKKDGKIIDNRRPTRSSTLER) is disordered. The span at 1185–1205 (SKKDGKIIDNRRPTRSSTLER) shows a compositional bias: basic and acidic residues.

Requires Zn(2+) as cofactor. The precursor is cleaved by a furin endopeptidase. In terms of processing, glycosylated. Can be O-fucosylated by POFUT2 on a serine or a threonine residue found within the consensus sequence C1-X(2)-(S/T)-C2-G of the TSP type-1 repeat domains where C1 and C2 are the first and second cysteine residue of the repeat, respectively. Fucosylated repeats can then be further glycosylated by the addition of a beta-1,3-glucose residue by the glucosyltransferase, B3GALTL. Fucosylation mediates the efficient secretion of ADAMTS family members. Can also be C-glycosylated with one or two mannose molecules on tryptophan residues within the consensus sequence W-X-X-W of the TPRs, and N-glycosylated. These other glycosylations can also facilitate secretion. Found in cartilage and skin.

The protein localises to the secreted. It is found in the extracellular space. Its subcellular location is the extracellular matrix. Functionally, cleaves the propeptides of type II collagen prior to fibril assembly. Does not act on types I and III collagens. The sequence is that of A disintegrin and metalloproteinase with thrombospondin motifs 3 (ADAMTS3) from Homo sapiens (Human).